We begin with the raw amino-acid sequence, 417 residues long: NADH-quinone oxidoreductase subunit D (417 aa).

Belongs to the complex I 49 kDa subunit family. As to quaternary structure, NDH-1 is composed of 14 different subunits. Subunits NuoB, C, D, E, F, and G constitute the peripheral sector of the complex.

The protein localises to the cell membrane. It carries out the reaction a quinone + NADH + 5 H(+)(in) = a quinol + NAD(+) + 4 H(+)(out). Functionally, NDH-1 shuttles electrons from NADH, via FMN and iron-sulfur (Fe-S) centers, to quinones in the respiratory chain. The immediate electron acceptor for the enzyme in this species is believed to be ubiquinone. Couples the redox reaction to proton translocation (for every two electrons transferred, four hydrogen ions are translocated across the cytoplasmic membrane), and thus conserves the redox energy in a proton gradient. The chain is NADH-quinone oxidoreductase subunit D from Polynucleobacter asymbioticus (strain DSM 18221 / CIP 109841 / QLW-P1DMWA-1) (Polynucleobacter necessarius subsp. asymbioticus).